Consider the following 578-residue polypeptide: Lysine--tRNA ligase (578 aa).

Mg(2+)-binding residues include Glu-414 and Glu-421.

It belongs to the class-II aminoacyl-tRNA synthetase family. Homodimer. Mg(2+) serves as cofactor.

Its subcellular location is the cytoplasm. It carries out the reaction tRNA(Lys) + L-lysine + ATP = L-lysyl-tRNA(Lys) + AMP + diphosphate. The chain is Lysine--tRNA ligase from Porphyromonas gingivalis (strain ATCC BAA-308 / W83).